Here is a 213-residue protein sequence, read N- to C-terminus: Ribonuclease HII (213 aa).

Positions 25-213 (KTLCGVDEAG…FKPVKQLLPH (189 aa)) constitute an RNase H type-2 domain. A divalent metal cation is bound by residues Asp31, Glu32, and Asp124.

The protein belongs to the RNase HII family. Requires Mn(2+) as cofactor. Mg(2+) is required as a cofactor.

The protein resides in the cytoplasm. The enzyme catalyses Endonucleolytic cleavage to 5'-phosphomonoester.. Endonuclease that specifically degrades the RNA of RNA-DNA hybrids. In Magnetococcus marinus (strain ATCC BAA-1437 / JCM 17883 / MC-1), this protein is Ribonuclease HII.